Consider the following 573-residue polypeptide: Plasmepsin X (573 aa).

The N-terminal stretch at 1-26 (MKRISPLNTLFYLSLFFSYTFKGLKC) is a signal peptide. Positions 27-221 (TRIYKIGTKA…SSIEKNFIAL (195 aa)) are excised as a propeptide. 2 cysteine pairs are disulfide-bonded: C39-C51 and C42-C48. The interval 167–211 (KGNKNFTNNENNSDNENNSDNENNSDNENNLDNENNLDNENNSDN) is disordered. The span at 183 to 203 (NNSDNENNSDNENNLDNENNL) shows a compositional bias: acidic residues. A Peptidase A1 domain is found at 248-567 (FVGELLVGTP…ESRPSMVGVA (320 aa)). The active site involves D266. Cysteines 279 and 284 form a disulfide. The N-linked (GlcNAc...) asparagine glycan is linked to N334. Cysteines 447 and 448 form a disulfide. D457 is an active-site residue. C482 and C521 are disulfide-bonded.

This sequence belongs to the peptidase A1 family. Autocleaved into a p16 prodomain form and two mature forms p44 and p51.

The protein localises to the cytoplasmic vesicle. Its subcellular location is the secretory vesicle. With respect to regulation, inhibited by aminohydantoin compounds such as CWHM-117. Its function is as follows. During the asexual blood stage, processes key proteins essential for merozoite egress and invasion of host erythrocytes. Cleaves and activates proteases SUB1 and SUB2. May process members of the EBL and Rh protein families. Also cleaves apical membrane protein AMA1. During the mosquito vector stage and probably in ookinetes, cleaves CelTOS. This chain is Plasmepsin X, found in Plasmodium falciparum (isolate NF54).